The following is a 479-amino-acid chain: Adenosylhomocysteinase (479 aa).

Residues Thr56, Asp133, and Glu199 each contribute to the substrate site. 200 to 202 provides a ligand contact to NAD(+); it reads TTT. Residues Lys229 and Asp233 each coordinate substrate. Residues Asn234, 263–268, Glu286, Asn321, 342–344, and Asn390 each bind NAD(+); these read GYGDVG and IGH.

It belongs to the adenosylhomocysteinase family. Homotetramer. It depends on NAD(+) as a cofactor.

The catalysed reaction is S-adenosyl-L-homocysteine + H2O = L-homocysteine + adenosine. It functions in the pathway amino-acid biosynthesis; L-homocysteine biosynthesis; L-homocysteine from S-adenosyl-L-homocysteine: step 1/1. In terms of biological role, adenosylhomocysteine is a competitive inhibitor of S-adenosyl-L-methionine-dependent methyl transferase reactions; therefore adenosylhomocysteinase may play a key role in the control of methylations via regulation of the intracellular concentration of adenosylhomocysteine. The protein is Adenosylhomocysteinase of Plasmodium yoelii yoelii.